We begin with the raw amino-acid sequence, 369 residues long: 1-aminocyclopropane-1-carboxylate oxidase homolog 2 (369 aa).

Residues Lys217–His318 form the Fe2OG dioxygenase domain. Residues His241, Asp243, and His297 each contribute to the Fe cation site.

It belongs to the iron/ascorbate-dependent oxidoreductase family. Fe cation is required as a cofactor.

The protein is 1-aminocyclopropane-1-carboxylate oxidase homolog 2 of Arabidopsis thaliana (Mouse-ear cress).